Consider the following 1022-residue polypeptide: GPI ethanolamine phosphate transferase 1 (1022 aa).

The Cytoplasmic segment spans residues 1–6; it reads MARVGR. Residues 7 to 27 traverse the membrane as a helical segment; sequence VGFLTLAVVFHLMYAYSIFDI. At 28 to 466 the chain is on the lumenal side; that stretch reads YFVSPIVSGM…LQTYDWLFLR (439 aa). N-linked (GlcNAc...) asparagine glycosylation is found at Asn148 and Asn433. A helical membrane pass occupies residues 467-487; the sequence is TIVSLGYLGWIAYALTTVIDL. The Cytoplasmic portion of the chain corresponds to 488–498; sequence HVLHGKSESNR. A helical membrane pass occupies residues 499 to 519; it reads TTFSIMFFSSILVALFSVLLY. The Lumenal segment spans residues 520–560; sequence QGSSWRYYLYALFPIFFWEEVFARRKALLAGREILLGHVHS. The chain crosses the membrane as a helical span at residues 561–581; it reads VSGYFAFAIQLLLYVGVLEAL. Over 582 to 589 the chain is Cytoplasmic; sequence VQSYFHRD. The chain crosses the membrane as a helical span at residues 590–610; it reads IFTVCFILGGFWPITYGTKFL. The Lumenal portion of the chain corresponds to 611–614; that stretch reads GQHK. A helical transmembrane segment spans residues 615–635; sequence LLSASWALGCFLMSIFTLLPA. The Cytoplasmic portion of the chain corresponds to 636–640; sequence NKVED. The chain crosses the membrane as a helical span at residues 641 to 661; it reads MMMISCGSLLMFLTGLLYLIF. Residues 662–685 lie on the Lumenal side of the membrane; it reads ERSILGQKRSSDPNSVVSSCGSRT. Residues 686 to 706 traverse the membrane as a helical segment; sequence IMGAQVGMILLALIVTRSSVA. At 707–713 the chain is on the cytoplasmic side; sequence SLQAKQG. A helical transmembrane segment spans residues 714–734; it reads LPLGNQVLGWAILVSSLLLPF. Residues 735–749 lie on the Lumenal side of the membrane; it reads LHRLYPNSHYLHRLM. 2 helical membrane-spanning segments follow: residues 750–770 and 771–791; these read VIFL…EGLF and YFVF…IYIH. At 792-837 the chain is on the lumenal side; that stretch reads TTAPTREQDHSVANGSLPAKKPSPGNTVVVEGQPYRYRTLSVSDAR. Residue Asn805 is glycosylated (N-linked (GlcNAc...) asparagine). Residues 838 to 858 traverse the membrane as a helical segment; it reads VALFFFFLLQSGFFSTGNIAS. Residues 859 to 880 are Cytoplasmic-facing; it reads VSSFSLDSVYRLIPIFNPFAQG. The chain crosses the membrane as a helical span at residues 881-901; sequence ALLILKLLIPFAIISANLGIL. Residues 902-910 lie on the Lumenal side of the membrane; that stretch reads NHRLEVAPS. A helical transmembrane segment spans residues 911-931; the sequence is ALFMVVMSISDVMTLNFFYMV. At 932 to 947 the chain is on the cytoplasmic side; it reads RDEGSWLEIGTTISHF. Residues 948–968 form a helical membrane-spanning segment; it reads CIASFLCTFVAVLEFLSELFI. The Lumenal segment spans residues 969-1022; it reads SGVDFGHPATTVGSAVAKAVNGSVACGHSPDSDISGEDSTSVGITAKADPDARS. A glycan (N-linked (GlcNAc...) asparagine) is linked at Asn989. A disordered region spans residues 998–1022; that stretch reads PDSDISGEDSTSVGITAKADPDARS.

This sequence belongs to the PIGG/PIGN/PIGO family. PIGN subfamily.

It localises to the endoplasmic reticulum membrane. Its pathway is glycolipid biosynthesis; glycosylphosphatidylinositol-anchor biosynthesis. In terms of biological role, ethanolamine phosphate transferase involved in glycosylphosphatidylinositol-anchor biosynthesis. Transfers ethanolamine phosphate to the first alpha-1,4-linked mannose of the glycosylphosphatidylinositol precursor of GPI-anchor. The sequence is that of GPI ethanolamine phosphate transferase 1 (mcd4) from Aspergillus oryzae (strain ATCC 42149 / RIB 40) (Yellow koji mold).